The following is a 430-amino-acid chain: Elongation factor 1-alpha (430 aa).

The tr-type G domain occupies 7 to 219 (KPHVNIVFIG…DQIPEPEKPV (213 aa)). The interval 16 to 23 (GHVDHGKS) is G1. 16–23 (GHVDHGKS) serves as a coordination point for GTP. Ser-23 provides a ligand contact to Mg(2+). Residues 70–74 (GITID) form a G2 region. Positions 91-94 (DAPG) are G3. Residues 91 to 95 (DAPGH) and 146 to 149 (NKMD) each bind GTP. Residues 146–149 (NKMD) are G4. The G5 stretch occupies residues 183-185 (SAW).

The protein belongs to the TRAFAC class translation factor GTPase superfamily. Classic translation factor GTPase family. EF-Tu/EF-1A subfamily.

The protein localises to the cytoplasm. The catalysed reaction is GTP + H2O = GDP + phosphate + H(+). In terms of biological role, GTP hydrolase that promotes the GTP-dependent binding of aminoacyl-tRNA to the A-site of ribosomes during protein biosynthesis. The protein is Elongation factor 1-alpha of Pyrococcus woesei.